Reading from the N-terminus, the 208-residue chain is NAD(P)H-quinone oxidoreductase subunit M, chloroplastic (208 aa).

The N-terminal 21 residues, 1 to 21 (MAATSSYTACTKFSMLGWIGG), are a transit peptide targeting the chloroplast. The segment covering 37–49 (QQAEVEESQQVNA) has biased composition (low complexity). The interval 37–70 (QQAEVEESQQVNAQEEEQEKMKQQGKQKLPRPVE) is disordered.

The protein belongs to the NDH complex subunit M family. As to quaternary structure, part of the chloroplast NDH complex, composed of a mixture of chloroplast and nucleus encoded subunits. Component of the NDH subcomplex A, at least composed of ndhH, ndhI, ndhJ, ndhK, ndhL, ndhM, ndhN and ndhO.

The protein resides in the plastid. It localises to the chloroplast thylakoid membrane. The enzyme catalyses a plastoquinone + NADH + (n+1) H(+)(in) = a plastoquinol + NAD(+) + n H(+)(out). It carries out the reaction a plastoquinone + NADPH + (n+1) H(+)(in) = a plastoquinol + NADP(+) + n H(+)(out). Its function is as follows. NDH shuttles electrons from NAD(P)H:plastoquinone, via FMN and iron-sulfur (Fe-S) centers, to quinones in the photosynthetic chain and possibly in a chloroplast respiratory chain. The immediate electron acceptor for the enzyme in this species is believed to be plastoquinone. Couples the redox reaction to proton translocation, and thus conserves the redox energy in a proton gradient. This Vitis vinifera (Grape) protein is NAD(P)H-quinone oxidoreductase subunit M, chloroplastic.